The following is a 234-amino-acid chain: Ubiquinone biosynthesis O-methyltransferase (234 aa).

Positions 36, 56, 77, and 125 each coordinate S-adenosyl-L-methionine.

This sequence belongs to the methyltransferase superfamily. UbiG/COQ3 family.

The catalysed reaction is a 3-demethylubiquinol + S-adenosyl-L-methionine = a ubiquinol + S-adenosyl-L-homocysteine + H(+). The enzyme catalyses a 3-(all-trans-polyprenyl)benzene-1,2-diol + S-adenosyl-L-methionine = a 2-methoxy-6-(all-trans-polyprenyl)phenol + S-adenosyl-L-homocysteine + H(+). It participates in cofactor biosynthesis; ubiquinone biosynthesis. O-methyltransferase that catalyzes the 2 O-methylation steps in the ubiquinone biosynthetic pathway. In Actinobacillus pleuropneumoniae serotype 7 (strain AP76), this protein is Ubiquinone biosynthesis O-methyltransferase.